A 338-amino-acid polypeptide reads, in one-letter code: Nicotinate-nucleotide--dimethylbenzimidazole phosphoribosyltransferase (338 aa).

Glu305 serves as the catalytic Proton acceptor.

The protein belongs to the CobT family.

The enzyme catalyses 5,6-dimethylbenzimidazole + nicotinate beta-D-ribonucleotide = alpha-ribazole 5'-phosphate + nicotinate + H(+). It functions in the pathway nucleoside biosynthesis; alpha-ribazole biosynthesis; alpha-ribazole from 5,6-dimethylbenzimidazole: step 1/2. Its function is as follows. Catalyzes the synthesis of alpha-ribazole-5'-phosphate from nicotinate mononucleotide (NAMN) and 5,6-dimethylbenzimidazole (DMB). The polypeptide is Nicotinate-nucleotide--dimethylbenzimidazole phosphoribosyltransferase (Rhizobium etli (strain CIAT 652)).